The primary structure comprises 546 residues: MWKASAGHAVSITQDDGGADDWETDPDFVNDVSEKEQRWGAKTVQGSGHQEHINIHKLRENVFQEHQTLKEKELETGPKASHGYGGKFGVEQDRMDRSAVGHEYQSKLSKHCSQVDSVRGFGGKFGVQMDRVDQSAVGFEYQGKTEKHASQKDYSSGFGGKYGVQADRVDKSAVGFDYQGKTEKHESQKDYSKGFGGKYGIDKDKVDKSAVGFEYQGKTEKHESQKDYVKGFGGKFGVQTDRQDKCALGWDHQEKLQLHESQKDYKTGFGGKFGVQSERQDSSAVGFDYKERLAKHESQQDYAKGFGGKYGVQKDRMDKNASTFEEVVQVPSAYQKTVPIEAVTSKTSNIRANFENLAKEREQEDRRKAEAERAQRMAKERQEQEEARRKLEEQARAKKQTPPASPSPQPIEDRPPSSPIYEDAAPFKAEPSYRGSEPEPEYSIEAAGIPEAGSQQGLTYTSEPVYETTEAPGHYQAEDDTYDGYESDLGITAIALYDYQAAGDDEISFDPDDIITNIEMIDDGWWRGVCKGRYGLFPANYVELRQ.

Positions 1 to 28 (MWKASAGHAVSITQDDGGADDWETDPDF) are disordered. The span at 17–28 (GGADDWETDPDF) shows a compositional bias: acidic residues. 6 Cortactin repeats span residues 80-116 (ASHG…SQVD), 117-153 (SVRG…SQKD), 154-190 (YSSG…SQKD), 191-227 (YSKG…SQKD), 228-264 (YVKG…SQKD), and 265-301 (YKTG…SQQD). An N6-acetyllysine mark is found at lysine 87 and lysine 107. At serine 113 the chain carries Phosphoserine. Omega-N-methylarginine is present on arginine 119. Lysine 124 is subject to N6-acetyllysine. Lysine 144 bears the N6-acetyllysine; alternate mark. Lysine 144 participates in a covalent cross-link: Glycyl lysine isopeptide (Lys-Gly) (interchain with G-Cter in SUMO1); alternate. Lysine 144 participates in a covalent cross-link: Glycyl lysine isopeptide (Lys-Gly) (interchain with G-Cter in SUMO2); alternate. Serine 150 bears the Phosphoserine mark. Lysine 152, lysine 161, and lysine 171 each carry N6-acetyllysine. Residue lysine 181 is modified to N6-acetyllysine; alternate. A Glycyl lysine isopeptide (Lys-Gly) (interchain with G-Cter in SUMO1); alternate cross-link involves residue lysine 181. Residue lysine 181 forms a Glycyl lysine isopeptide (Lys-Gly) (interchain with G-Cter in SUMO2); alternate linkage. N6-acetyllysine is present on residues lysine 193 and lysine 198. Residue lysine 218 forms a Glycyl lysine isopeptide (Lys-Gly) (interchain with G-Cter in SUMO1) linkage. Lysine 235 bears the N6-acetyllysine mark. Residue serine 261 is modified to Phosphoserine. Lysine 272 carries the post-translational modification N6-acetyllysine. Position 295 is an N6-acetyllysine; alternate (lysine 295). Lysine 295 participates in a covalent cross-link: Glycyl lysine isopeptide (Lys-Gly) (interchain with G-Cter in SUMO2); alternate. One copy of the Cortactin 7; truncated repeat lies at 302-324 (YAKGFGGKYGVQKDRMDKNASTF). Residues lysine 304, lysine 309, lysine 314, and lysine 346 each carry the N6-acetyllysine modification. Positions 348–401 (SNIRANFENLAKEREQEDRRKAEAERAQRMAKERQEQEEARRKLEEQARAKKQT) form a coiled coil. The segment at 355–424 (ENLAKEREQE…PPSSPIYEDA (70 aa)) is disordered. Residues 357–396 (LAKEREQEDRRKAEAERAQRMAKERQEQEEARRKLEEQAR) are compositionally biased toward basic and acidic residues. Threonine 401 carries the post-translational modification Phosphothreonine. Residues serine 405, serine 407, serine 417, and serine 418 each carry the phosphoserine modification. Tyrosine 421 and tyrosine 442 each carry phosphotyrosine. Serine 443 carries the post-translational modification Phosphoserine. A Phosphotyrosine; by FAK1 modification is found at tyrosine 466. 2 positions are modified to phosphotyrosine; by SRC: tyrosine 482 and tyrosine 485. The region spanning 488–546 (DLGITAIALYDYQAAGDDEISFDPDDIITNIEMIDDGWWRGVCKGRYGLFPANYVELRQ) is the SH3 domain.

As to quaternary structure, part of a complex composed of NEDD9, AURKA and CTTN; within the complex NEDD9 acts as a scaffold protein and is required for complex formation. Interacts (via N-terminus) with NEDD9. Identified in a complex containing FGFR4, NCAM1, CDH2, PLCG1, FRS2, SRC, SHC1, GAP43 and CTTN. Forms a complex with ABL1 and MYLK. Interacts with SHANK2 and SHANK3 (via its SH3 domain). Interacts with PLXDC2 and SRCIN1. Interacts with SAMSN1 (via SH3 domain). Interacts (via SH3 domain) with ASAP1 (via Pro-rich region). Interacts (via SH3 domain) with DNM2. Interacts with ACTN1. Interacts with FER. Interacts with KCNA2 (via non-phosphorylated C-terminus). Interacts with FGD1. Interacts with ABL2. Interacts with CTTNBP2NL; this interaction may target CTTN to stress fibers. Interacts with CTTNBP2; this interaction may target CTTN at the cell cortex or dendritic spines. Interacts with KCNH1. Interacts (via SH3 domain) with DIP2A (via N-terminus); the interaction enhances CTTN acetylation and is required for proper synaptic transmission. Interacts with XIRP1 (via N-terminus); the interaction promotes CTTN localization to intercalated disks in cardiomyocytes. Post-translationally, acetylated. Phosphorylated by FER. Phosphorylated in response to FGR activation. Phosphorylation by SRC promotes MYLK binding. Phosphorylated on tyrosine residues in response to CHRM1 activation. Phosphorylated by PTK2/FAK1 in response to cell adhesion. Tyrosine phosphorylation in transformed cells may contribute to cellular growth regulation and transformation. Phosphorylated by PKN2 at both serine and threonine residues in a GTP-bound Rac1-dependent manner in hyaluronan-induced astrocytes and hence down-regulated CTTN ability to associate with filamentous actin. As to expression, expressed at intercalated disks in the heart (at protein level). Expressed in most tissues, except in B-lymphocytes or plasma cells.

The protein resides in the cytoplasm. It localises to the cytoskeleton. Its subcellular location is the cell projection. The protein localises to the lamellipodium. It is found in the ruffle. The protein resides in the dendrite. It localises to the cell membrane. Its subcellular location is the podosome. The protein localises to the cell junction. It is found in the focal adhesion. The protein resides in the membrane. It localises to the clathrin-coated pit. Its subcellular location is the dendritic spine. The protein localises to the cell cortex. It is found in the endoplasmic reticulum. Functionally, contributes to the organization of the actin cytoskeleton and cell shape. Plays a role in the formation of lamellipodia and in cell migration. Plays a role in the regulation of neuron morphology, axon growth and formation of neuronal growth cones. Through its interaction with CTTNBP2, involved in the regulation of neuronal spine density. Plays a role in focal adhesion assembly and turnover. In complex with ABL1 and MYLK regulates cortical actin-based cytoskeletal rearrangement critical to sphingosine 1-phosphate (S1P)-mediated endothelial cell (EC) barrier enhancement. Plays a role in intracellular protein transport and endocytosis, and in modulating the levels of potassium channels present at the cell membrane. Plays a role in receptor-mediated endocytosis via clathrin-coated pits. Required for stabilization of KCNH1 channels at the cell membrane. The protein is Src substrate cortactin (Cttn) of Mus musculus (Mouse).